Reading from the N-terminus, the 413-residue chain is Multifunctional CCA protein (413 aa).

2 residues coordinate ATP: G8 and R11. CTP-binding residues include G8 and R11. Positions 21 and 23 each coordinate Mg(2+). ATP is bound by residues R91, R137, and R140. Positions 91, 137, and 140 each coordinate CTP. In terms of domain architecture, HD spans 228 to 329 (TGIHTLMTLS…VKLFDNIDAW (102 aa)).

It belongs to the tRNA nucleotidyltransferase/poly(A) polymerase family. Bacterial CCA-adding enzyme type 1 subfamily. In terms of assembly, monomer. Can also form homodimers and oligomers. The cofactor is Mg(2+). Requires Ni(2+) as cofactor.

The enzyme catalyses a tRNA precursor + 2 CTP + ATP = a tRNA with a 3' CCA end + 3 diphosphate. The catalysed reaction is a tRNA with a 3' CCA end + 2 CTP + ATP = a tRNA with a 3' CCACCA end + 3 diphosphate. In terms of biological role, catalyzes the addition and repair of the essential 3'-terminal CCA sequence in tRNAs without using a nucleic acid template. Adds these three nucleotides in the order of C, C, and A to the tRNA nucleotide-73, using CTP and ATP as substrates and producing inorganic pyrophosphate. tRNA 3'-terminal CCA addition is required both for tRNA processing and repair. Also involved in tRNA surveillance by mediating tandem CCA addition to generate a CCACCA at the 3' terminus of unstable tRNAs. While stable tRNAs receive only 3'-terminal CCA, unstable tRNAs are marked with CCACCA and rapidly degraded. The sequence is that of Multifunctional CCA protein from Enterobacter sp. (strain 638).